Here is a 356-residue protein sequence, read N- to C-terminus: 3-isopropylmalate dehydrogenase (356 aa).

Substrate-binding residues include Arg-95, Arg-105, Arg-133, and Asp-223. Positions 223, 247, and 251 each coordinate Mg(2+). Residue Gly-281–Asn-293 participates in NAD(+) binding.

This sequence belongs to the isocitrate and isopropylmalate dehydrogenases family. LeuB type 1 subfamily. Homodimer. The cofactor is Mg(2+). Mn(2+) is required as a cofactor.

Its subcellular location is the cytoplasm. The catalysed reaction is (2R,3S)-3-isopropylmalate + NAD(+) = 4-methyl-2-oxopentanoate + CO2 + NADH. The protein operates within amino-acid biosynthesis; L-leucine biosynthesis; L-leucine from 3-methyl-2-oxobutanoate: step 3/4. In terms of biological role, catalyzes the oxidation of 3-carboxy-2-hydroxy-4-methylpentanoate (3-isopropylmalate) to 3-carboxy-4-methyl-2-oxopentanoate. The product decarboxylates to 4-methyl-2 oxopentanoate. This Neisseria meningitidis serogroup A / serotype 4A (strain DSM 15465 / Z2491) protein is 3-isopropylmalate dehydrogenase.